The following is a 168-amino-acid chain: MQTPQFLQQRRKFAAAFLAFIFLLAVVDTAEAGKKEKPEKKVKKSDCGEWQWSVCVPTSGDCGLGTREGTRTGAECKQTMKTQRCKIPCNWKKQFGAECKYQFQAWGECDLNTALKTRTGSLKRALHNADCQKTVTISKPCGKVTKPKPQAESKKKKKEGKKQEKMLD.

Residues 1 to 32 (MQTPQFLQQRRKFAAAFLAFIFLLAVVDTAEA) form the signal peptide. 5 disulfide bridges follow: Cys-47/Cys-76, Cys-55/Cys-85, Cys-62/Cys-89, Cys-99/Cys-131, and Cys-109/Cys-141. Chondroitin sulfate binding stretches follow at residues 92 to 99 (KKQFGAEC) and 123 to 131 (KRALHNADC). The interval 139 to 168 (KPCGKVTKPKPQAESKKKKKEGKKQEKMLD) is disordered. Residues 147–168 (PKPQAESKKKKKEGKKQEKMLD) are chondroitin sulfate A binding.

It belongs to the pleiotrophin family. As to quaternary structure, interacts with ALK and NEK6. Interacts with PTPRZ1 (via chondroitin sulfate groups); promotes formation of homooligomers; oligomerization impairs tyrosine phosphatase activity. Forms a complex with PTPRZ1 and CTNNB1; this complex inactivates PTPRZ1 protein tyrosine phosphatase activity through PTN interaction and stimulates tyrosine phosphorylation of CTNNB1. Interacts with ITGB3 and ITGA5. Forms a complex with PTPRZ1 and integrin alpha-V/beta-3 (ITGAV:ITGB3) that stimulates endothelial cell migration through ITGB3 'Tyr-773' phosphorylation. Interacts with SDC3 (via heparan sulfate chains); this interaction mediates the neurite outgrowth-promoting signal from PTN to the cytoskeleton of growing neurites; this interaction mediates osteoblast recruitment. Interacts with GPC2 (via heparan sulfate); this interaction promotes neurite outgrowth through binding of PTN with chondroitin sulfate of proteoglycans, thereby releasing PTPRS of chondroitin sulfate proteoglycans (CSPGs) and leading to binding with heparan sulfate of GPC2. Post-translationally, phosphorylated by NEK6.

It localises to the secreted. Its function is as follows. Secreted growth factor that mediates its signal through cell-surface proteoglycan and non-proteoglycan receptors. Binds cell-surface proteoglycan receptor via their chondroitin sulfate (CS) groups. Thereby regulates many processes like cell proliferation, cell survival, cell growth, cell differentiation and cell migration in several tissues namely neuron and bone. Also plays a role in synaptic plasticity and learning-related behavior by inhibiting long-term synaptic potentiation. Binds PTPRZ1, leading to neutralization of the negative charges of the CS chains of PTPRZ1, inducing PTPRZ1 clustering, thereby causing the dimerization and inactivation of its phosphatase activity leading to increased tyrosine phosphorylation of each of the PTPRZ1 substrates like ALK, CTNNB1 or AFAP1L2 in order to activate the PI3K-AKT pathway. Through PTPRZ1 binding controls oligodendrocyte precursor cell differentiation by enhancing the phosphorylation of AFAP1L2 in order to activate the PI3K-AKT pathway. Forms a complex with PTPRZ1 and integrin alpha-V/beta-3 (ITGAV:ITGB3) that stimulates endothelial cell migration through SRC dephosphorylation and activation that consequently leads to ITGB3 'Tyr-773' phosphorylation. In adult hippocampus promotes dendritic arborization, spine development, and functional integration and connectivity of newborn granule neurons through ALK by activating AKT signaling pathway. Binds GPC2 and chondroitin sulfate proteoglycans (CSPGs) at the neuron surface, leading to abrogation of binding between PTPRS and CSPGs and neurite outgrowth promotion. Binds SDC3 and mediates bone formation by recruiting and attaching osteoblasts/osteoblast precursors to the sites for new bone deposition. Binds ALK and promotes cell survival and cell proliferation through MAPK pathway activation. Inhibits proliferation and enhances differentiation of neural stem cells by inhibiting FGF2-induced fibroblast growth factor receptor signaling pathway. Mediates regulatory mechanisms in normal hemostasis and in hematopoietic regeneration and in maintaining the balance of myeloid and lymphoid regeneration. In addition may play a role in the female reproductive system, auditory response and the progesterone-induced decidualization pathway. The chain is Pleiotrophin from Sus scrofa (Pig).